A 308-amino-acid polypeptide reads, in one-letter code: MPTTLLQSDLPGLPLRHRGKVRDVFDIPRERLPAGTPPGDYLLMVATDRLSAFDVVLPDPIPGKGEMLCQVSNFWFAKTAHLMPNHLTGIDVASVLPEGVDPALYAKRAVVTRKLKPVPVEAIARGYLIGSGWKDYQRTGKVSGIDLPDGLRQAEQLPEPIFTPSTKAAVGDHDENIDFDAMVKQVGAEMAERVRDATLRIYKFAADYARERGIILADTKFEFGTDADGRLYIMDEMLTPDSSRYWPADEYEVGTSPPSYDKQFVRDYLETLDWGKTAPGPTIPAEIIERTRAKYGEALQRLAGISVD.

It belongs to the SAICAR synthetase family.

It catalyses the reaction 5-amino-1-(5-phospho-D-ribosyl)imidazole-4-carboxylate + L-aspartate + ATP = (2S)-2-[5-amino-1-(5-phospho-beta-D-ribosyl)imidazole-4-carboxamido]succinate + ADP + phosphate + 2 H(+). It participates in purine metabolism; IMP biosynthesis via de novo pathway; 5-amino-1-(5-phospho-D-ribosyl)imidazole-4-carboxamide from 5-amino-1-(5-phospho-D-ribosyl)imidazole-4-carboxylate: step 1/2. This is Phosphoribosylaminoimidazole-succinocarboxamide synthase from Stenotrophomonas maltophilia (strain R551-3).